The chain runs to 103 residues: Secreted Ly-6/uPAR-related protein 1 (103 aa).

The signal sequence occupies residues 1–22; that stretch reads MASRWAVQLLLVAAWSMGCGEA. Residues 24 to 73 form the UPAR/Ly6 domain; the sequence is KCYTCKEPMTSASCRTITRCKPEDTACMTTLVTVEAEYPFNQSPVVTRSC. 5 cysteine pairs are disulfide-bonded: Cys25-Cys50, Cys28-Cys37, Cys43-Cys73, Cys77-Cys93, and Cys94-Cys99.

As to quaternary structure, homodimer. Interacts with PLAU. Interacts with CHRNA7. As to expression, granulocytes. Expressed in skin. Predominantly expressed in the granular layer of skin, notably the acrosyringium. Identified in several biological fluids such as sweat, saliva, tears, plasma and urine.

The protein localises to the secreted. Has an antitumor activity. Was found to be a marker of late differentiation of the skin. Implicated in maintaining the physiological and structural integrity of the keratinocyte layers of the skin. In vitro down-regulates keratinocyte proliferation; the function may involve the proposed role as modulator of nicotinic acetylcholine receptors (nAChRs) activity. In vitro inhibits alpha-7-dependent nAChR currents in an allosteric manner. In T cells may be involved in regulation of intracellular Ca(2+) signaling. Seems to have an immunomodulatory function in the cornea. The function may implicate a possible role as a scavenger receptor for PLAU thereby blocking PLAU-dependent functions of PLAUR such as in cell migration and proliferation. The protein is Secreted Ly-6/uPAR-related protein 1 (SLURP1) of Homo sapiens (Human).